Consider the following 340-residue polypeptide: Fructose-1,6-bisphosphatase class 1 (340 aa).

Glu107, Asp126, Leu128, and Asp129 together coordinate Mg(2+). Asn215 lines the substrate pocket. Glu287 is a binding site for Mg(2+).

It belongs to the FBPase class 1 family. As to quaternary structure, homotetramer. Mg(2+) serves as cofactor.

The protein localises to the cytoplasm. The catalysed reaction is beta-D-fructose 1,6-bisphosphate + H2O = beta-D-fructose 6-phosphate + phosphate. Its pathway is carbohydrate biosynthesis; gluconeogenesis. The chain is Fructose-1,6-bisphosphatase class 1 from Brucella canis (strain ATCC 23365 / NCTC 10854 / RM-666).